The primary structure comprises 228 residues: Hematopoietically-expressed homeobox protein hhex (228 aa).

Residues 117-176 constitute a DNA-binding region (homeobox); that stretch reads RKGGQVRFSNDQTIELEKKFETQKYLSPPERKRLAKMLQLSERQVKTWFQNRRAKWRRLK. Residues 175–228 are disordered; that stretch reads LKQENPPSTGKREAEDSDTRRLSDAAARARELESGASTDSEELLDIEDEHQFTL. Over residues 184–207 the composition is skewed to basic and acidic residues; that stretch reads GKREAEDSDTRRLSDAAARARELE. Over residues 213–222 the composition is skewed to acidic residues; sequence DSEELLDIED.

In terms of tissue distribution, expressed in embryonic endothelial and blood lineages. From late-blastula stage, expression is restricted to the dorsal marginal region of the extraembryonic yolk syncytial layer (YSL). By the onset of gastrulation, expressed in the entire dorsal half of the YSL. Post-gastrulation, expression appears in both anterior and posterior lateral plate mesoderm by the 3-somite stage. Posteriorly, expression is in the intermediate cell mass (ICM), which contains both endothelial and blood precursors. Subsequently expressed in the developing endothelial cells including the endocardium until the onset of circulation (24 hpf) and disappears completely by 30 hpf, at which point expression is seen in the thyroid and liver primordia. Also expressed in the developing biliary tree and pancreas.

Its subcellular location is the nucleus. In terms of biological role, recognizes the DNA sequence 5'-ATTAA-3'. Transcriptional repressor. Regulates the differentiation of both endothelial and blood cells. Plays a role in embryonic dorsoventral patterning by regulating bmp expression. May establish anterior identity. Functions in the embryo to regulate liver development. Functions extraembryonically to generate organ chirality. The protein is Hematopoietically-expressed homeobox protein hhex of Danio rerio (Zebrafish).